Reading from the N-terminus, the 760-residue chain is MOXD1 homolog 2 (760 aa).

The tract at residues 1-34 (MAHPRKAVATPATLQLGPPAQTAQSPAATLRHSR) is disordered. A compositionally biased stretch (low complexity) spans 18-34 (PPAQTAQSPAATLRHSR). Residues 47-67 (CFISCHTFNLFLLLLLLASGV) traverse the membrane as a helical segment. 3 N-linked (GlcNAc...) asparagine glycosylation sites follow: N78, N198, and N223. In terms of domain architecture, DOMON spans 117–233 (DDFRILWQII…DTMRLLYMYH (117 aa)). 3 disulfide bridges follow: C339/C367, C467/C581, and C543/C565. N668 carries an N-linked (GlcNAc...) asparagine glycan. The disordered stretch occupies residues 678–701 (RCKPKRPLAPPTERTAPPPASDLS). The chain crosses the membrane as a helical span at residues 740–760 (FISCLLWLGASSWWLLLMLRT).

This sequence belongs to the copper type II ascorbate-dependent monooxygenase family.

Its subcellular location is the membrane. In Drosophila melanogaster (Fruit fly), this protein is MOXD1 homolog 2 (olf413).